A 397-amino-acid polypeptide reads, in one-letter code: Flavohemoprotein A (397 aa).

The Globin domain maps to 2-137 (SLSQQSISII…IAQAFIDAEA (136 aa)). Position 84 (His-84) interacts with heme b. Catalysis depends on charge relay system residues Tyr-94 and Glu-136. The reductase stretch occupies residues 150 to 397 (WRDTREFIVD…YEIFGPLTNV (248 aa)). One can recognise an FAD-binding FR-type domain in the interval 151–266 (RDTREFIVDR…SPPAGDYVVD (116 aa)). FAD-binding positions include Tyr-189 and 208 to 211 (RHYS). 279-284 (GVGITP) contributes to the NADP(+) binding site. 390 to 393 (IFGP) serves as a coordination point for FAD.

This sequence belongs to the globin family. Two-domain flavohemoproteins subfamily. It in the C-terminal section; belongs to the flavoprotein pyridine nucleotide cytochrome reductase family. FAD serves as cofactor. It depends on heme b as a cofactor.

It localises to the cytoplasm. It carries out the reaction 2 nitric oxide + NADPH + 2 O2 = 2 nitrate + NADP(+) + H(+). The catalysed reaction is 2 nitric oxide + NADH + 2 O2 = 2 nitrate + NAD(+) + H(+). Functionally, is involved in NO detoxification in an aerobic process, termed nitric oxide dioxygenase (NOD) reaction that utilizes O(2) and NAD(P)H to convert NO to nitrate, which protects the cell from various noxious nitrogen compounds. Therefore, plays a central role in the inducible response to nitrosative stress. In the presence of oxygen and NADH, it has NADH oxidase activity, which leads to the generation of superoxide and H(2)O(2). Under anaerobic conditions, it also exhibits nitric oxide reductase and FAD reductase activities. However, all these reactions are much lower than NOD activity. This is Flavohemoprotein A (fhbA) from Dictyostelium discoideum (Social amoeba).